Here is a 222-residue protein sequence, read N- to C-terminus: UPF0441 protein CKO_04429 (222 aa).

Residues 177–194 are compositionally biased toward low complexity; that stretch reads TVPKTAMAPKPATTTTVT. A disordered region spans residues 177-222; that stretch reads TVPKTAMAPKPATTTTVTRGGFGESVAKQSTMQRSATGTSNRSMGG. Over residues 203 to 222 the composition is skewed to polar residues; the sequence is AKQSTMQRSATGTSNRSMGG.

It belongs to the UPF0441 family.

The protein is UPF0441 protein CKO_04429 of Citrobacter koseri (strain ATCC BAA-895 / CDC 4225-83 / SGSC4696).